Consider the following 218-residue polypeptide: dTTP/UTP pyrophosphatase (218 aa).

Asp-69 functions as the Proton acceptor in the catalytic mechanism.

This sequence belongs to the Maf family. YhdE subfamily. A divalent metal cation serves as cofactor.

It is found in the cytoplasm. It carries out the reaction dTTP + H2O = dTMP + diphosphate + H(+). The catalysed reaction is UTP + H2O = UMP + diphosphate + H(+). Its function is as follows. Nucleoside triphosphate pyrophosphatase that hydrolyzes dTTP and UTP. May have a dual role in cell division arrest and in preventing the incorporation of modified nucleotides into cellular nucleic acids. The protein is dTTP/UTP pyrophosphatase of Thermomicrobium roseum (strain ATCC 27502 / DSM 5159 / P-2).